The following is a 96-amino-acid chain: Evasin P1078 (96 aa).

Residues 1-28 (MAFNTITFLQWAVFVAILFNMNLHSASA) form the signal peptide. 3 disulfides stabilise this stretch: Cys48–Cys67, Cys52–Cys69, and Cys63–Cys80. Residue Asn51 is glycosylated (N-linked (GlcNAc...) asparagine). A glycan (N-linked (GlcNAc...) asparagine) is linked at Asn74.

The protein resides in the secreted. Salivary chemokine-binding protein which binds to host chemokines CXCL1, CXCL2, CXCL3, CXCL5, CXCL6, CXCL11 and CXCL13. The protein is Evasin P1078 of Ixodes ricinus (Common tick).